We begin with the raw amino-acid sequence, 90 residues long: Cytochrome c7 (90 aa).

The N-terminal stretch at 1–20 (MKRIIASLALSVFCAGLAFA) is a signal peptide. Residues His-37, His-40, Cys-47, Cys-50, His-51, His-67, Cys-70, Cys-73, His-74, Cys-84, Cys-87, and His-88 each contribute to the heme site.

Binds 3 heme groups per subunit.

In terms of biological role, may be involved in anaerobic iron respiration. This is Cytochrome c7 from Geobacter metallireducens (strain ATCC 53774 / DSM 7210 / GS-15).